The chain runs to 161 residues: Endoribonuclease YbeY (161 aa).

Zn(2+)-binding residues include histidine 121, histidine 125, and histidine 131.

The protein belongs to the endoribonuclease YbeY family. It depends on Zn(2+) as a cofactor.

It is found in the cytoplasm. Single strand-specific metallo-endoribonuclease involved in late-stage 70S ribosome quality control and in maturation of the 3' terminus of the 16S rRNA. This Xanthomonas campestris pv. campestris (strain 8004) protein is Endoribonuclease YbeY.